A 532-amino-acid chain; its full sequence is MKTSEERLLAPDSLPPDLAPAPVPQGSPAEKNTDFEPVPPPCGGDDQPQLATDPVASLVVSQELQQGDSVPLEVEFNTSSELSPGIEEQDVSEHASLPGEETNLPELESGEATEGVSEERAEVDEGDTFWTYSFSQVPRYLSGSWSEFSTRSENFLKGCKWAPDGSCILTNSADNVLRIYNLPPELYSEQEQVDYAEMVPVLRMVEGDTIYDYCWYSLMSSTQPDTSYVASSSRENPIHIWDAFTGELRASFRAYNHLDELTAAHSLCFSPDGSQLFCGFNRTVRVFSTSRPGRDCEVRATFAKKQGQSGIISCIAFSPSQPLYACGSYGRTIGLYAWDDGSPLALLGGHQGGITHLCFHPDGNLFFSGARKDAELLCWDLRQPGHLLWSLSREVTTNQRIYFDLDPSGQFLVSGNTSGVVSVWDISGALSDDSKLEPVVTFLPQKDCTNGVSLHPTLPLLATASGQRVFPEPTNSGDEGELELELPLLSLCHAHPECQLQLWWCGGGPDPSSPVDDQDEKGQRRTEAVGMS.

The segment at 1–53 (MKTSEERLLAPDSLPPDLAPAPVPQGSPAEKNTDFEPVPPPCGGDDQPQLATD) is disordered. Over residues 13–25 (SLPPDLAPAPVPQ) the composition is skewed to pro residues. A phosphoserine mark is found at serine 27, serine 61, and serine 83. The disordered stretch occupies residues 80-122 (SELSPGIEEQDVSEHASLPGEETNLPELESGEATEGVSEERAE). 6 WD repeats span residues 151-190 (RSEN…YSEQ), 206-251 (EGDT…LRAS), 256-297 (NHLD…RDCE), 307-348 (GQSG…ALLG), 349-389 (GHQG…HLLW), and 395-434 (VTTN…SDDS). At threonine 474 the chain carries Phosphothreonine. Serine 476 carries the post-translational modification Phosphoserine. The segment at 510–532 (DPSSPVDDQDEKGQRRTEAVGMS) is disordered. A compositionally biased stretch (basic and acidic residues) spans 520–532 (EKGQRRTEAVGMS).

The protein belongs to the TCAB1 family. Component of the telomerase holoenzyme complex composed of one molecule of TERT, one molecule of WRAP53/TCAB1, two molecules of H/ACA ribonucleoprotein complex subunits DKC1, NOP10, NHP2 and GAR1, and a telomerase RNA template component (TERC). The telomerase holoenzyme complex is associated with TEP1, SMG6/EST1A and POT1. Interacts with the chaperonin-containing T-complex (TRiC) complex; which mediates the folding of WRAP53/TCAB1. Interacts with COIL. Interacts with SMN1. Interacts with RNF8. Interacts with histone H2AX. Phosphorylated at Ser-61 by ATM in response to DNA damage, promoting its interaction with histone H2AX and localization to sites of DNA double-strand breaks.

The protein localises to the nucleus. Its subcellular location is the cajal body. The protein resides in the chromosome. It localises to the telomere. RNA chaperone that plays a key role in telomere maintenance and RNA localization to Cajal bodies. Specifically recognizes and binds the Cajal body box (CAB box) present in both small Cajal body RNAs (scaRNAs) and telomerase RNA template component (TERC). Essential component of the telomerase holoenzyme complex, a ribonucleoprotein complex essential for the replication of chromosome termini that elongates telomeres in most eukaryotes. In the telomerase holoenzyme complex, required to stimulate the catalytic activity of the complex. Acts by specifically binding the CAB box of the TERC RNA and controlling the folding of the CR4/CR5 region of the TERC RNA, a critical step for telomerase activity. In addition, also controls telomerase holoenzyme complex localization to Cajal body. During S phase, required for delivery of TERC to telomeres during S phase and for telomerase activity. In addition to its role in telomere maintenance, also required for Cajal body formation, probably by mediating localization of scaRNAs to Cajal bodies. Also plays a role in DNA repair: phosphorylated by ATM in response to DNA damage and relocalizes to sites of DNA double-strand breaks to promote the repair of DNA double-strand breaks. Acts by recruiting the ubiquitin ligase RNF8 to DNA breaks and promote both homologous recombination (HR) and non-homologous end joining (NHEJ). The polypeptide is Telomerase Cajal body protein 1 (Mus musculus (Mouse)).